The chain runs to 329 residues: Cytosolic arginine sensor for mTORC1 subunit 2 (329 aa).

2 ACT domains span residues 72–139 (ADAT…MHTL) and 262–322 (ELWK…NALQ).

The protein belongs to the GATS family. In terms of assembly, may form homodimers and heterodimers.

It localises to the cytoplasm. The protein resides in the cytosol. Functions as a negative regulator of the TORC1 signaling pathway. This chain is Cytosolic arginine sensor for mTORC1 subunit 2, found in Xenopus laevis (African clawed frog).